The sequence spans 225 residues: Cbp/p300-interacting transactivator 2 (225 aa).

This sequence belongs to the CITED family.

Its subcellular location is the nucleus. Transcriptional coactivator or corepressor of the p300/CBP-mediated transcription complex. May be involved in sex determination, early gonad development, left-right patterning during embryogenesis and differentiation of the adrenal cortex. The polypeptide is Cbp/p300-interacting transactivator 2 (cited2) (Xenopus tropicalis (Western clawed frog)).